The sequence spans 719 residues: METSALLKQQIAKEIGLSQKHVESVIRLLEDGNTVPFIARYRKEQTGSMDEVQIQTISERWQYIQNLNQRKEEVIRLIAEQDKLTDNLKRKIEQSVKLQEVEDLYRPYKQKRKTKATVAKSKGLEPLADYILTLPQDDHLAATADQYISEEKEVFTREEAIEGAKHIIAEQISDEPTFRKWIRQETFKRGTIKSAAGKSADTDEKNVYEMYYEYEEPIAKVVPHRVLAMNRGEKEDILKVAIEPPADHIKAYLEKQIIKNRSTSVREILQETIEDSYKRLIQPAIEREIRKELSEKADEQAIHIFSENLRKLLLQPPMKGKTVLGVDPAFRTGCKLAVSDETGKVLKIDVIYPHAPVNKTKEAHEKVKKILEQYQVEMVAIGNGTASRETEQFIVNVLRDMPRKIYYVIVNEAGASVYSASELAREEFPDLKVEERSAVSIARRLQDPLAELVKIDPKSVGVGQYQHDVSQKRLNESLRFVVETVVNQVGVNVNTASAALLQYVAGLSKSVAGNVVKKREEIGKFSNRKELKDIPRLGAKTYEQCIGFLRVQEGTEPLDRTGIHPESYKETKALLKKLGLSTEHIGTAELKDKINQLALSETAKELGIGEITLKDICEQLTRPERDPRDKVPKPLLKTDVLQLEDLKEGMELQGTVRNVVDFGAFVDIGVKQDGLVHISKLSNQFVKHPLDVVSVGDIVTVWVDGVDVQKGRVSLSMVK.

Residues 64–100 (IQNLNQRKEEVIRLIAEQDKLTDNLKRKIEQSVKLQE) are a coiled coil. The 70-residue stretch at 649–718 (GMELQGTVRN…QKGRVSLSMV (70 aa)) folds into the S1 motif domain.

This is an uncharacterized protein from Bacillus subtilis (strain 168).